A 485-amino-acid polypeptide reads, in one-letter code: Glutamate--tRNA ligase (485 aa).

Residues 11 to 21 carry the 'HIGH' region motif; sequence PSPTGHLHIGN. The 'KMSKS' region signature appears at 252 to 256; the sequence is KLSKR. Lys255 contacts ATP.

This sequence belongs to the class-I aminoacyl-tRNA synthetase family. Glutamate--tRNA ligase type 1 subfamily. In terms of assembly, monomer.

It localises to the cytoplasm. The catalysed reaction is tRNA(Glu) + L-glutamate + ATP = L-glutamyl-tRNA(Glu) + AMP + diphosphate. Its function is as follows. Catalyzes the attachment of glutamate to tRNA(Glu) in a two-step reaction: glutamate is first activated by ATP to form Glu-AMP and then transferred to the acceptor end of tRNA(Glu). The chain is Glutamate--tRNA ligase from Bacillus cytotoxicus (strain DSM 22905 / CIP 110041 / 391-98 / NVH 391-98).